Reading from the N-terminus, the 375-residue chain is Growth/differentiation factor 8 (375 aa).

The first 23 residues, 1–23 (MQKLAVYVYIYLFMQIAVDPVAL), serve as a signal peptide directing secretion. Positions 24-266 (DGSSQPTENA…VTDTPKRSRR (243 aa)) are excised as a propeptide. Asn-71 carries N-linked (GlcNAc...) asparagine glycosylation. 4 cysteine pairs are disulfide-bonded: Cys-272-Cys-282, Cys-281-Cys-340, Cys-309-Cys-372, and Cys-313-Cys-374.

The protein belongs to the TGF-beta family. Homodimer; disulfide-linked.

It localises to the secreted. Functionally, acts specifically as a negative regulator of skeletal muscle growth. This chain is Growth/differentiation factor 8 (MSTN), found in Gallus gallus (Chicken).